Consider the following 80-residue polypeptide: Biotin synthase auxiliary protein (80 aa).

This sequence belongs to the BsaP family. The cofactor is iron-sulfur cluster.

In terms of biological role, required for the activity of the biotin synthase BioB. The chain is Biotin synthase auxiliary protein from Mycobacterium leprae (strain TN).